Here is a 458-residue protein sequence, read N- to C-terminus: Phosphoglucosamine mutase (458 aa).

Residue serine 106 is the Phosphoserine intermediate of the active site. Mg(2+) contacts are provided by serine 106, aspartate 247, aspartate 249, and aspartate 251. Serine 106 carries the post-translational modification Phosphoserine.

It belongs to the phosphohexose mutase family. Mg(2+) serves as cofactor. Activated by phosphorylation.

The catalysed reaction is alpha-D-glucosamine 1-phosphate = D-glucosamine 6-phosphate. Its function is as follows. Catalyzes the conversion of glucosamine-6-phosphate to glucosamine-1-phosphate. This Chlamydia felis (strain Fe/C-56) (Chlamydophila felis) protein is Phosphoglucosamine mutase.